Here is a 753-residue protein sequence, read N- to C-terminus: 5-methyltetrahydropteroyltriglutamate--homocysteine methyltransferase (753 aa).

Residues 17–20 (RELK) and K117 each bind 5-methyltetrahydropteroyltri-L-glutamate. Residues 431–433 (IGS) and E484 each bind L-homocysteine. L-methionine-binding positions include 431-433 (IGS) and E484. 5-methyltetrahydropteroyltri-L-glutamate-binding positions include 515 to 516 (RC) and W561. Residue D599 participates in L-homocysteine binding. D599 is an L-methionine binding site. Residue E605 participates in 5-methyltetrahydropteroyltri-L-glutamate binding. 3 residues coordinate Zn(2+): H641, C643, and E665. H694 functions as the Proton donor in the catalytic mechanism. C726 provides a ligand contact to Zn(2+).

This sequence belongs to the vitamin-B12 independent methionine synthase family. Zn(2+) serves as cofactor.

It catalyses the reaction 5-methyltetrahydropteroyltri-L-glutamate + L-homocysteine = tetrahydropteroyltri-L-glutamate + L-methionine. Its pathway is amino-acid biosynthesis; L-methionine biosynthesis via de novo pathway; L-methionine from L-homocysteine (MetE route): step 1/1. Its function is as follows. Catalyzes the transfer of a methyl group from 5-methyltetrahydrofolate to homocysteine resulting in methionine formation. This is 5-methyltetrahydropteroyltriglutamate--homocysteine methyltransferase from Escherichia coli O7:K1 (strain IAI39 / ExPEC).